We begin with the raw amino-acid sequence, 168 residues long: Protein YciE (168 aa).

In Escherichia coli (strain K12), this protein is Protein YciE (yciE).